The following is a 337-amino-acid chain: Phenylalanine--tRNA ligase alpha subunit (337 aa).

Residue glutamate 252 coordinates Mg(2+).

Belongs to the class-II aminoacyl-tRNA synthetase family. Phe-tRNA synthetase alpha subunit type 1 subfamily. As to quaternary structure, tetramer of two alpha and two beta subunits. It depends on Mg(2+) as a cofactor.

It is found in the cytoplasm. The catalysed reaction is tRNA(Phe) + L-phenylalanine + ATP = L-phenylalanyl-tRNA(Phe) + AMP + diphosphate + H(+). This is Phenylalanine--tRNA ligase alpha subunit from Francisella tularensis subsp. holarctica (strain OSU18).